A 53-amino-acid chain; its full sequence is uncharacterized protein (53 aa).

Residues 24–44 traverse the membrane as a helical segment; the sequence is LMTFIAVNAVLSLILIRAVIL.

Its subcellular location is the membrane. This is an uncharacterized protein from Methanocaldococcus jannaschii (strain ATCC 43067 / DSM 2661 / JAL-1 / JCM 10045 / NBRC 100440) (Methanococcus jannaschii).